The primary structure comprises 508 residues: Methionine--tRNA ligase (508 aa).

The 'HIGH' region motif lies at 12–22 (YYVNDVAHIGH). The 'KMSKS' region signature appears at 295–299 (KISKS). ATP is bound at residue Lys-298.

Belongs to the class-I aminoacyl-tRNA synthetase family. MetG type 2B subfamily. In terms of assembly, monomer.

The protein resides in the cytoplasm. It carries out the reaction tRNA(Met) + L-methionine + ATP = L-methionyl-tRNA(Met) + AMP + diphosphate. In terms of biological role, is required not only for elongation of protein synthesis but also for the initiation of all mRNA translation through initiator tRNA(fMet) aminoacylation. This is Methionine--tRNA ligase (metG) from Rickettsia prowazekii (strain Madrid E).